The sequence spans 981 residues: Ubiquitin carboxyl-terminal hydrolase 37 (981 aa).

The KEN box 1 motif lies at 32–34 (KEN). Short sequence motifs (D-box) lie at residues 71–79 (RLMLTLQDN) and 96–105 (RLFLDAVHQN). Positions 111–308 (MKPSQGSGSF…SAKRSLGFLP (198 aa)) are disordered. Residue serine 114 is modified to Phosphoserine. Residues 135 to 148 (RQLSYSDNQASSKR) show a composition bias toward polar residues. Basic and acidic residues predominate over residues 149-159 (GSLETKDDIPF). The D-box 3 motif lies at 160 to 168 (RKVLGNPGR). Serine 170 is subject to Phosphoserine. A compositionally biased stretch (polar residues) spans 172–195 (KTATGSGITVTRTIPSLTSASTPL). Serine 212 is subject to Phosphoserine. The KEN box 2 signature appears at 223 to 225 (KEN). Positions 245–259 (SREKQLSLKQSEENR) are enriched in basic and acidic residues. Residues 266–300 (LQSSSFYGSRTGSKDYSSGSTNLDRTNVSGQTPSA) are compositionally biased toward polar residues. The region spanning 343-953 (QGFSNLGNTC…SGYIFFYMHK (611 aa)) is the USP domain. Catalysis depends on cysteine 352, which acts as the Nucleophile. Serine 630 is subject to Phosphoserine; by CDK2. Phosphoserine is present on residues serine 652 and serine 654. Disordered stretches follow at residues 673–704 (GCEQ…GFDG) and 719–831 (KREA…EQKE). Basic and acidic residues-rich tracts occupy residues 683 to 697 (KDSK…KSEL) and 719 to 734 (KREA…DDKP). In terms of domain architecture, UIM 1 spans 706 to 725 (SEEELLAAVLEMSKREASPT). Serine 772 carries the phosphoserine modification. A compositionally biased stretch (basic and acidic residues) spans 776 to 788 (ITKDCDENKENKT). Positions 784–786 (KEN) match the KEN box 3 motif. UIM domains lie at 808-827 (REEQ…QEAW) and 830-849 (KEDD…FNNS). The span at 813 to 824 (LQQALAQSLQEQ) shows a compositional bias: low complexity. Histidine 908 serves as the catalytic Proton acceptor.

Belongs to the peptidase C19 family. Interacts with FZR1/CDH1. Interacts with CDT1. In terms of processing, polyubiquitinated via 'Lys-11'-linked ubiquitin by the APC(CDH1) complex during late mitosis, leading to its degradation. Able to mediate auto-deubiquitination. Post-translationally, phosphorylated at Ser-630 by CDK2 during G1/S phase but not during mitosis; phosphorylation at Ser-630 is required for deubiquitinase activity. Also polyubiquitinated during early G1 phase, without leading to degradation. Phosphorylated at Ser-114 by ATM following DNA damage, which in turn increases its deubiquitination activity towards BLM.

It localises to the nucleus. It is found in the chromosome. It carries out the reaction Thiol-dependent hydrolysis of ester, thioester, amide, peptide and isopeptide bonds formed by the C-terminal Gly of ubiquitin (a 76-residue protein attached to proteins as an intracellular targeting signal).. Functionally, deubiquitinase that plays a role in different processes including cell cycle regulation, DNA replication or DNA damage response. Antagonizes the anaphase-promoting complex (APC/C) during G1/S transition by mediating deubiquitination of cyclin-A (CCNA1 and CCNA2), thereby promoting S phase entry. Specifically mediates deubiquitination of 'Lys-11'-linked polyubiquitin chains, a specific ubiquitin-linkage type mediated by the APC/C complex. Phosphorylation at Ser-628 during G1/S phase maximizes the deubiquitinase activity, leading to prevent degradation of cyclin-A (CCNA1 and CCNA2). Plays an important role in the regulation of DNA replication by stabilizing the licensing factor CDT1. Also plays an essential role beyond S-phase entry to promote the efficiency and fidelity of replication by deubiquitinating checkpoint kinase 1/CHK1, promoting its stability. Sustains the DNA damage response (DDR) by deubiquitinating and stabilizing the ATP-dependent DNA helicase BLM. Mechanistically, DNA double-strand breaks (DSB) promotes ATM-mediated phosphorylation of USP37 and enhances the binding between USP37 and BLM. Promotes cell migration by deubiquitinating and stabilizing the epithelial-mesenchymal transition (EMT)-inducing transcription factor SNAI. Plays a role in the regulation of mitotic spindle assembly and mitotic progression by associating with chromatin-associated WAPL and stabilizing it through deubiquitination. The protein is Ubiquitin carboxyl-terminal hydrolase 37 (USP37) of Canis lupus familiaris (Dog).